The sequence spans 223 residues: Phage shock protein A homolog (223 aa).

Residues 29 to 185 are a coiled coil; sequence IDQALRDMRS…AGMEDRNKAM (157 aa).

It belongs to the PspA/Vipp/IM30 family.

The sequence is that of Phage shock protein A homolog from Deinococcus radiodurans (strain ATCC 13939 / DSM 20539 / JCM 16871 / CCUG 27074 / LMG 4051 / NBRC 15346 / NCIMB 9279 / VKM B-1422 / R1).